We begin with the raw amino-acid sequence, 156 residues long: MNVIEAAVATPDARVALVIARFNNFINDSLLSGALDALKRIGQVKDENITVVWVPGAYELPVTARALAKTGKHDAVVALGTVIRGGTAHFEFVAGEASSGLASVAMHSDIPVAFGVLTTENIEQAIERAGTKAGNKGAEAALTALEMINVLKAINA.

5-amino-6-(D-ribitylamino)uracil is bound by residues Phe-22, 57–59 (AYE), and 81–83 (TVI). 86–87 (GT) is a binding site for (2S)-2-hydroxy-3-oxobutyl phosphate. The active-site Proton donor is the His-89. Residue Phe-114 coordinates 5-amino-6-(D-ribitylamino)uracil. Position 128 (Arg-128) interacts with (2S)-2-hydroxy-3-oxobutyl phosphate.

It belongs to the DMRL synthase family. As to quaternary structure, forms an icosahedral capsid composed of 60 subunits, arranged as a dodecamer of pentamers.

The enzyme catalyses (2S)-2-hydroxy-3-oxobutyl phosphate + 5-amino-6-(D-ribitylamino)uracil = 6,7-dimethyl-8-(1-D-ribityl)lumazine + phosphate + 2 H2O + H(+). Its pathway is cofactor biosynthesis; riboflavin biosynthesis; riboflavin from 2-hydroxy-3-oxobutyl phosphate and 5-amino-6-(D-ribitylamino)uracil: step 1/2. In terms of biological role, catalyzes the formation of 6,7-dimethyl-8-ribityllumazine by condensation of 5-amino-6-(D-ribitylamino)uracil with 3,4-dihydroxy-2-butanone 4-phosphate. This is the penultimate step in the biosynthesis of riboflavin. The chain is 6,7-dimethyl-8-ribityllumazine synthase from Erwinia tasmaniensis (strain DSM 17950 / CFBP 7177 / CIP 109463 / NCPPB 4357 / Et1/99).